The chain runs to 200 residues: Vacuolar iron transporter homolog 3 (200 aa).

The Cytoplasmic segment spans residues 1 to 31 (MESHNTLNLDMEKDQEKAFDYSKRAQWLRAA). The helical transmembrane segment at 32-52 (VLGANDGLVSTASLMMGVGAV) threads the bilayer. Residues 53–59 (KQNVKIM) lie on the Vacuolar side of the membrane. The chain crosses the membrane as a helical span at residues 60–80 (ILTGFAGLVAGACSMAIGEFV). Over 81-113 (SVYSQYDIEVAQMKRETGGEIEKEKLPSPTQAA) the chain is Cytoplasmic. A helical membrane pass occupies residues 114-134 (AASALAFSLGAMVPLLAAAFV). Residues 135–140 (KEYKVR) are Vacuolar-facing. Residues 141-161 (IGAIVAAVTLALVMFGWLGAV) traverse the membrane as a helical segment. The Cytoplasmic portion of the chain corresponds to 162–173 (LGKAPVVKSSLR). A helical transmembrane segment spans residues 174-194 (VLVGGWLAMAITYGFTKLIGS). Residues 195–200 (HSHMYV) lie on the Vacuolar side of the membrane.

Belongs to the CCC1 family.

The protein resides in the vacuole membrane. The enzyme catalyses Fe(2+)(in) = Fe(2+)(out). Probable vacuolar iron transporter that may be involved in the regulation of iron distribution throughout the plant. The protein is Vacuolar iron transporter homolog 3 of Arabidopsis thaliana (Mouse-ear cress).